A 124-amino-acid polypeptide reads, in one-letter code: Small ribosomal subunit protein uS12 (124 aa).

D89 carries the post-translational modification 3-methylthioaspartic acid. The interval 105–124 is disordered; sequence AGVKDRRQSRSKYGAKRPKA. Over residues 113–124 the composition is skewed to basic residues; it reads SRSKYGAKRPKA.

The protein belongs to the universal ribosomal protein uS12 family. In terms of assembly, part of the 30S ribosomal subunit. Contacts proteins S8 and S17. May interact with IF1 in the 30S initiation complex.

With S4 and S5 plays an important role in translational accuracy. In terms of biological role, interacts with and stabilizes bases of the 16S rRNA that are involved in tRNA selection in the A site and with the mRNA backbone. Located at the interface of the 30S and 50S subunits, it traverses the body of the 30S subunit contacting proteins on the other side and probably holding the rRNA structure together. The combined cluster of proteins S8, S12 and S17 appears to hold together the shoulder and platform of the 30S subunit. In Synechococcus elongatus (strain ATCC 33912 / PCC 7942 / FACHB-805) (Anacystis nidulans R2), this protein is Small ribosomal subunit protein uS12 (rpsL).